The chain runs to 162 residues: 2-C-methyl-D-erythritol 2,4-cyclodiphosphate synthase (162 aa).

Residues D12 and H14 each contribute to the a divalent metal cation site. 4-CDP-2-C-methyl-D-erythritol 2-phosphate-binding positions include 12-14 and 38-39; these read DVH and HS. H46 contributes to the a divalent metal cation binding site. Residues 60–62, 65–69, and R146 each bind 4-CDP-2-C-methyl-D-erythritol 2-phosphate; these read DIG and FPDTD.

The protein belongs to the IspF family. As to quaternary structure, homotrimer. A divalent metal cation is required as a cofactor.

It carries out the reaction 4-CDP-2-C-methyl-D-erythritol 2-phosphate = 2-C-methyl-D-erythritol 2,4-cyclic diphosphate + CMP. It functions in the pathway isoprenoid biosynthesis; isopentenyl diphosphate biosynthesis via DXP pathway; isopentenyl diphosphate from 1-deoxy-D-xylulose 5-phosphate: step 4/6. Its function is as follows. Involved in the biosynthesis of isopentenyl diphosphate (IPP) and dimethylallyl diphosphate (DMAPP), two major building blocks of isoprenoid compounds. Catalyzes the conversion of 4-diphosphocytidyl-2-C-methyl-D-erythritol 2-phosphate (CDP-ME2P) to 2-C-methyl-D-erythritol 2,4-cyclodiphosphate (ME-CPP) with a corresponding release of cytidine 5-monophosphate (CMP). This Bordetella bronchiseptica (strain ATCC BAA-588 / NCTC 13252 / RB50) (Alcaligenes bronchisepticus) protein is 2-C-methyl-D-erythritol 2,4-cyclodiphosphate synthase.